The primary structure comprises 89 residues: Small ribosomal subunit protein uS15 (89 aa).

Positions 1-13 (MYLTSEKKEEIFS) are enriched in basic and acidic residues. The interval 1–24 (MYLTSEKKEEIFSKHGKGKNDTGS) is disordered.

Belongs to the universal ribosomal protein uS15 family. Part of the 30S ribosomal subunit. Forms a bridge to the 50S subunit in the 70S ribosome, contacting the 23S rRNA.

In terms of biological role, one of the primary rRNA binding proteins, it binds directly to 16S rRNA where it helps nucleate assembly of the platform of the 30S subunit by binding and bridging several RNA helices of the 16S rRNA. Functionally, forms an intersubunit bridge (bridge B4) with the 23S rRNA of the 50S subunit in the ribosome. In Christiangramia forsetii (strain DSM 17595 / CGMCC 1.15422 / KT0803) (Gramella forsetii), this protein is Small ribosomal subunit protein uS15.